A 216-amino-acid chain; its full sequence is Lipoprotein-releasing system ATP-binding protein LolD (216 aa).

The 215-residue stretch at 2 to 216 (IHLEGITKSF…TIHMVDGNII (215 aa)) folds into the ABC transporter domain. 34-41 (GPSGAGKT) is a binding site for ATP.

This sequence belongs to the ABC transporter superfamily. Lipoprotein translocase (TC 3.A.1.125) family. In terms of assembly, the complex is composed of two ATP-binding proteins (LolD) and two transmembrane proteins (LolC and LolE).

It is found in the cell inner membrane. Part of the ABC transporter complex LolCDE involved in the translocation of mature outer membrane-directed lipoproteins, from the inner membrane to the periplasmic chaperone, LolA. Responsible for the formation of the LolA-lipoprotein complex in an ATP-dependent manner. This chain is Lipoprotein-releasing system ATP-binding protein LolD, found in Bacteroides fragilis (strain YCH46).